Consider the following 306-residue polypeptide: Pantothenate kinase (306 aa).

Residue Gly-90–Ser-97 coordinates ATP.

This sequence belongs to the prokaryotic pantothenate kinase family.

The protein localises to the cytoplasm. The catalysed reaction is (R)-pantothenate + ATP = (R)-4'-phosphopantothenate + ADP + H(+). It participates in cofactor biosynthesis; coenzyme A biosynthesis; CoA from (R)-pantothenate: step 1/5. This Listeria welshimeri serovar 6b (strain ATCC 35897 / DSM 20650 / CCUG 15529 / CIP 8149 / NCTC 11857 / SLCC 5334 / V8) protein is Pantothenate kinase.